We begin with the raw amino-acid sequence, 403 residues long: ATP phosphoribosyltransferase regulatory subunit (403 aa).

This sequence belongs to the class-II aminoacyl-tRNA synthetase family. HisZ subfamily. As to quaternary structure, heteromultimer composed of HisG and HisZ subunits.

It localises to the cytoplasm. It participates in amino-acid biosynthesis; L-histidine biosynthesis; L-histidine from 5-phospho-alpha-D-ribose 1-diphosphate: step 1/9. In terms of biological role, required for the first step of histidine biosynthesis. May allow the feedback regulation of ATP phosphoribosyltransferase activity by histidine. This Crocosphaera subtropica (strain ATCC 51142 / BH68) (Cyanothece sp. (strain ATCC 51142)) protein is ATP phosphoribosyltransferase regulatory subunit.